The primary structure comprises 262 residues: 5'-nucleotidase SurE (262 aa).

The a divalent metal cation site is built by aspartate 8, aspartate 9, serine 39, and asparagine 95.

It belongs to the SurE nucleotidase family. It depends on a divalent metal cation as a cofactor.

The protein resides in the cytoplasm. It carries out the reaction a ribonucleoside 5'-phosphate + H2O = a ribonucleoside + phosphate. Functionally, nucleotidase that shows phosphatase activity on nucleoside 5'-monophosphates. The sequence is that of 5'-nucleotidase SurE from Methanothermobacter thermautotrophicus (strain ATCC 29096 / DSM 1053 / JCM 10044 / NBRC 100330 / Delta H) (Methanobacterium thermoautotrophicum).